Reading from the N-terminus, the 154-residue chain is Transcriptional repressor NrdR (154 aa).

The disordered stretch occupies residues 1 to 22; the sequence is MRCPFCAHDDSQVKDSRPTDDG. A zinc finger spans residues 3–34; that stretch reads CPFCAHDDSQVKDSRPTDDGAAIRRRRQCEGC. Residues 7–22 are compositionally biased toward basic and acidic residues; that stretch reads AHDDSQVKDSRPTDDG. Positions 49–139 constitute an ATP-cone domain; the sequence is MTVVKSDGRR…VYKDFREAKD (91 aa).

The protein belongs to the NrdR family. Zn(2+) is required as a cofactor.

In terms of biological role, negatively regulates transcription of bacterial ribonucleotide reductase nrd genes and operons by binding to NrdR-boxes. The chain is Transcriptional repressor NrdR from Rhizorhabdus wittichii (strain DSM 6014 / CCUG 31198 / JCM 15750 / NBRC 105917 / EY 4224 / RW1) (Sphingomonas wittichii).